Consider the following 222-residue polypeptide: MKNNVQLLMPREKMLKFGISALTDVELLALFLRTGTRGKDVLTLAKEMLENFGSLYGLLTSEYEQFSGVHGIGVAKFAQLKGIAELARRYYNVRMREESPLLSPEMTREFLQSQLTGEEREIFMVIFLDSQHRVITHSRLFSGTLNHVEVHPREIIREAIKINASALILAHNHPSGCAEPSKADKLITERIIKSCQFMDLRVLDHIVIGRGEYVSFAERGWI.

In terms of domain architecture, MPN spans 100 to 222; that stretch reads PLLSPEMTRE…YVSFAERGWI (123 aa). 3 residues coordinate Zn(2+): His-171, His-173, and Asp-184. Residues 171–184 carry the JAMM motif motif; that stretch reads HNHPSGCAEPSKAD.

This sequence belongs to the UPF0758 family. YicR subfamily.

In Escherichia coli O81 (strain ED1a), this protein is UPF0758 protein YicR.